Reading from the N-terminus, the 579-residue chain is Pre-mRNA-processing protein 45 (579 aa).

Disordered regions lie at residues 1 to 64, 218 to 254, 343 to 414, and 521 to 579; these read MTSV…GWRP, QQDP…LTAE, QKAR…TERR, and AAEA…VDDD. A compositionally biased stretch (pro residues) spans 234–245; that stretch reads RGPPSPPPPIMH. Over residues 343–359 the composition is skewed to basic and acidic residues; sequence QKAREERAASNRRDSRA. The span at 366 to 379 shows a compositional bias: low complexity; it reads ASRSPSAYSRSATP. Basic and acidic residues-rich tracts occupy residues 386–414, 521–538, and 563–579; these read ARER…TERR, AAEA…KDTT, and EVER…VDDD.

It belongs to the SNW family. Associated with the spliceosome.

It localises to the nucleus. In terms of biological role, involved in pre-mRNA splicing. This Aspergillus fumigatus (strain ATCC MYA-4609 / CBS 101355 / FGSC A1100 / Af293) (Neosartorya fumigata) protein is Pre-mRNA-processing protein 45 (prp45).